A 158-amino-acid polypeptide reads, in one-letter code: MNQEKLAKLQAQVRIGGKGTARRKKKVVHRTATADDKKLQSSLKKLAVNNIAGIEEVNMIKDDGTVIHFNNPKVQASLSANTFAITGHAEAKPITEMLPGILSQLGADSLTSLRKLAEQFPRQVLDSKTPKPEDIDEEEDDVPDLVENFDEASKNEAN.

Lys5 carries the post-translational modification N6-methyllysine. In terms of domain architecture, NAC-A/B spans 33–98; sequence TADDKKLQSS…AEAKPITEML (66 aa). Thr111 carries the phosphothreonine modification. Residues 123-158 form a disordered region; that stretch reads QVLDSKTPKPEDIDEEEDDVPDLVENFDEASKNEAN. Residues 134–150 show a composition bias toward acidic residues; sequence DIDEEEDDVPDLVENFD.

The protein belongs to the NAC-beta family.

This Bos taurus (Bovine) protein is Transcription factor BTF3 homolog 4 (BTF3L4).